The following is a 958-amino-acid chain: Coiled-coil domain-containing protein 187 (958 aa).

The segment covering 116–132 has biased composition (low complexity); the sequence is SSVSSGRMSGSSGGHES. Disordered regions lie at residues 116–160, 345–447, 470–492, and 510–602; these read SSVS…SDPR, ELTR…PRFF, QDIS…QRPW, and EPSP…KAQA. Composition is skewed to polar residues over residues 374-398 and 470-491; these read LQST…NSSL and QDIS…SQRP. Residues 536–545 show a composition bias toward low complexity; that stretch reads SSPSSKGKSA. A coiled-coil region spans residues 718–743; that stretch reads KQARLQALETMAEALRQRVDILTTKL. Residues 916 to 958 form a disordered region; the sequence is EVKKEGLVTPWTTRSCGKGEPADRPWAGWSGGQGGLPWASSTA.

This is Coiled-coil domain-containing protein 187 from Mus musculus (Mouse).